We begin with the raw amino-acid sequence, 238 residues long: Phosphoribosylaminoimidazole-succinocarboxamide synthase (238 aa).

The protein belongs to the SAICAR synthetase family.

It carries out the reaction 5-amino-1-(5-phospho-D-ribosyl)imidazole-4-carboxylate + L-aspartate + ATP = (2S)-2-[5-amino-1-(5-phospho-beta-D-ribosyl)imidazole-4-carboxamido]succinate + ADP + phosphate + 2 H(+). The protein operates within purine metabolism; IMP biosynthesis via de novo pathway; 5-amino-1-(5-phospho-D-ribosyl)imidazole-4-carboxamide from 5-amino-1-(5-phospho-D-ribosyl)imidazole-4-carboxylate: step 1/2. In Desulfitobacterium hafniense (strain Y51), this protein is Phosphoribosylaminoimidazole-succinocarboxamide synthase.